Reading from the N-terminus, the 369-residue chain is Methionine aminopeptidase 1B, chloroplastic (369 aa).

The N-terminal 61 residues, M1–A61, are a transit peptide targeting the chloroplast. H199 is a substrate binding site. D216, D227, and H290 together coordinate a divalent metal cation. H297 is a binding site for substrate. The a divalent metal cation site is built by E322 and E353.

Belongs to the peptidase M24A family. Methionine aminopeptidase type 1 subfamily. Requires Co(2+) as cofactor. It depends on Zn(2+) as a cofactor. Mn(2+) is required as a cofactor. The cofactor is Fe(2+). As to expression, ubiquitous. Preferentially expressed in green tissues.

It localises to the plastid. The protein resides in the chloroplast. It catalyses the reaction Release of N-terminal amino acids, preferentially methionine, from peptides and arylamides.. Its function is as follows. Removes the N-terminal methionine from nascent proteins. The N-terminal methionine is often cleaved when the second residue in the primary sequence is small and uncharged (Met-Ala-, Cys, Gly, Pro, Ser, Thr, or Val). The sequence is that of Methionine aminopeptidase 1B, chloroplastic (MAP1B) from Arabidopsis thaliana (Mouse-ear cress).